A 1841-amino-acid chain; its full sequence is MAKKKFSALEISLIVLFIIVTAIAIALVTVLATKVPAVEEIKSPTPTSNSTPTSTPTSTSTPTSTSTPSPGKCPPEQGEPINERINCIPEQHPTKAICEERGCCWRPWNNTVIPWCFFADNHGYNAESITNENAGLKATLNRIPSPTLFGEDIKSVILTTQTQTGNRFRFKITDPNNKRYEVPHQFVKEETGIPAADTLYDVQVSENPFSIKVIRKSNNKVLCDTSVGPLLYSNQYLQISTRLPSEYIYGFGGHIHKRFRHDLYWKTWPIFTRDEIPGDNNHNLYGHQTFFMGIGDTSGKSYGVFLMNSNAMEVFIQPTPIITYRVTGGILDFYIFLGDTPEQVVQQYQEVHWRPAMPAYWNLGFQLSRWNYGSLDTVSEVVRRNREAGIPYDAQVTDIDYMEDHKEFTYDRVKFNGLPEFAQDLHNHGKYIIILDPAISINKRANGAEYQTYVRGNEKNVWVNESDGTTPLIGEVWPGLTVYPDFTNPQTIEWWANECNLFHQQVEYDGLWIDMNEVSSFIQGSLNLKGVLLIVLNYPPFTPGILDKVMYSKTLCMDAVQHWGKQYDVHSLYGYSMAIATEQAVERVFPNKRSFILTRSTFGGSGRHANHWLGDNTASWEQMEWSITGMLEFGIFGMPLVGATSCGFLADTTEELCRRWMQLGAFYPFSRNHNAEGYMEQDPAYFGQDSSRHYLTIRYTLLPFLYTLFYRAHMFGETVARPFLYEFYDDTNSWIEDTQFLWGPALLITPVLRPGVENVSAYIPNATWYDYETGIKRPWRKERINMYLPGDKIGLHLRGGYIIPTQEPDVTTTASRKNPLGLIVALDDNQAAKGELFWDDGESKDSIEKKMYILYTFSVSNNELVLNCTHSSYAEGTSLAFKTIKVLGLREDVRSITVGENDQQMATHTNFTFDSANKILSITALNFNLAGSFIVRWCRTFSDNEKFTCYPDVGTATEGTCTQRGCLWQPVSGLSNVPPYYFPPENNPYTLTSIQPLPTGITAELQLNPPNARIKLPSNPISTLRVGVKYHPNDMLQFKIYDAQHKRYEVPVPLNIPDTPTSSNERLYDVEIKENPFGIQVRRRSSGKLIWDSRLPGFGFNDQFIQISTRLPSNYLYGFGEVEHTAFKRDLNWHTWGMFTRDQPPGYKLNSYGFHPYYMALENEGNAHGVLLLNSNGMDVTFQPTPALTYRTIGGILDFYMFLGPTPEIATRQYHEVIGFPVMPPYWALGFQLCRYGYRNTSEIEQLYNDMVAANIPYDVQYTDINYMERQLDFTIGERFKTLPEFVDRIRKDGMKYIVILAPAISGNETQPYPAFERGIQKDVFVKWPNTNDICWPKVWPDLPNVTIDETITEDEAVNASRAHVAFPDFFRNSTLEWWAREIYDFYNEKMKFDGLWIDMNEPSSFGIQMGGKVLNECRRMMTLNYPPVFSPELRVKEGEGASISEAMCMETEHILIDGSSVLQYDVHNLYGWSQVKPTLDALQNTTGLRGIVISRSTYPTTGRWGGHWLGDNYTTWDNLEKSLIGMLELNLFGIPYIGADICGVFHDSGYPSLYFVGIQVGAFYPYPRESPTINFTRSQDPVSWMKLLLQMSKKVLEIRYTLLPYFYTQMHEAHAHGGTVIRPLMHEFFDDKETWEIYKQFLWGPAFMVTPVVEPFRTSVTGYVPKARWFDYHTGADIKLKGILHTFSAPFDTINLHVRGGYILPCQEPARNTHLSRQNYMKLIVAADDNQMAQGTLFGDDGESIDTYERGQYTSIQFNLNQTTLTSTVLANGYKNKQEMRLGSIHIWGKGTLRISNANLVYGGRKHQPPFTQEEAKETLIFDLKNMNVTLDEPIQITWS.

The Cytoplasmic portion of the chain corresponds to 1–12 (MAKKKFSALEIS). Phosphoserine; by PKA is present on Ser-7. A helical; Signal-anchor for type II membrane protein membrane pass occupies residues 13–32 (LIVLFIIVTAIAIALVTVLA). The Lumenal segment spans residues 33–1841 (TKVPAVEEIK…LDEPIQITWS (1809 aa)). The disordered stretch occupies residues 42 to 81 (KSPTPTSNSTPTSTPTSTSTPTSTSTPSPGKCPPEQGEPI). Positions 43–70 (SPTPTSNSTPTSTPTSTSTPTSTSTPSP) are enriched in low complexity. Positions 71-120 (GKCPPEQGEPINERINCIPEQHPTKAICEERGCCWRPWNNTVIPWCFFAD) constitute a P-type 1 domain. 3 cysteine pairs are disulfide-bonded: Cys-73–Cys-104, Cys-87–Cys-103, and Cys-98–Cys-116. Asn-109 carries an N-linked (GlcNAc...) asparagine glycan. Positions 120–1013 (DNHGYNAESI…ELQLNPPNAR (894 aa)) are isomaltase. Residues Asp-274 and Asp-398 each contribute to the substrate site. Residues Tyr-401 and Tyr-410 each carry the sulfotyrosine modification. The N-linked (GlcNAc...) asparagine glycan is linked to Asn-464. Asp-514 acts as the Nucleophile; for isomaltase activity in catalysis. Arg-599 lines the substrate pocket. Residue Asp-615 is the For isomaltase activity of the active site. Cys-646 and Cys-657 are oxidised to a cystine. His-673 is a binding site for substrate. 4 N-linked (GlcNAc...) asparagine glycosylation sites follow: Asn-758, Asn-765, Asn-867, and Asn-910. The region spanning 936–984 (RWCRTFSDNEKFTCYPDVGTATEGTCTQRGCLWQPVSGLSNVPPYYFPP) is the P-type 2 domain. The segment at 1014–1841 (IKLPSNPIST…LDEPIQITWS (828 aa)) is sucrase. Asn-1240, Asn-1308, Asn-1345, Asn-1359, and Asn-1373 each carry an N-linked (GlcNAc...) asparagine glycan. Tyr-1387 carries the sulfotyrosine modification. Catalysis depends on Asp-1399, which acts as the Nucleophile; for sucrase activity. Catalysis depends on Glu-1402, which acts as the For sucrase activity. Residue Asn-1485 is glycosylated (N-linked (GlcNAc...) asparagine). Asp-1512 acts as the Proton donor; for sucrase activity in catalysis. N-linked (GlcNAc...) asparagine glycosylation is found at Asn-1513, Asn-1575, Asn-1762, and Asn-1829.

It belongs to the glycosyl hydrolase 31 family. The resulting sucrase and isomaltase subunits stay associated with one another in a complex by non-covalent linkages. The precursor is proteolytically cleaved when exposed to pancreatic proteases in the intestinal lumen. In terms of processing, sulfated.

The protein localises to the apical cell membrane. It carries out the reaction Hydrolysis of sucrose and maltose by an alpha-D-glucosidase-type action.. The enzyme catalyses Hydrolysis of (1-&gt;6)-alpha-D-glucosidic linkages in some oligosaccharides produced from starch and glycogen by alpha-amylase, and in isomaltose.. Functionally, plays an important role in the final stage of carbohydrate digestion. Isomaltase activity is specific for both alpha-1,4- and alpha-1,6-oligosaccharides. The sequence is that of Sucrase-isomaltase, intestinal (Si) from Rattus norvegicus (Rat).